A 955-amino-acid polypeptide reads, in one-letter code: Glycine dehydrogenase (decarboxylating) (955 aa).

Residue lysine 705 is modified to N6-(pyridoxal phosphate)lysine.

Belongs to the GcvP family. In terms of assembly, the glycine cleavage system is composed of four proteins: P, T, L and H. Pyridoxal 5'-phosphate is required as a cofactor.

It carries out the reaction N(6)-[(R)-lipoyl]-L-lysyl-[glycine-cleavage complex H protein] + glycine + H(+) = N(6)-[(R)-S(8)-aminomethyldihydrolipoyl]-L-lysyl-[glycine-cleavage complex H protein] + CO2. In terms of biological role, the glycine cleavage system catalyzes the degradation of glycine. The P protein binds the alpha-amino group of glycine through its pyridoxal phosphate cofactor; CO(2) is released and the remaining methylamine moiety is then transferred to the lipoamide cofactor of the H protein. The sequence is that of Glycine dehydrogenase (decarboxylating) from Aliivibrio fischeri (strain MJ11) (Vibrio fischeri).